The following is a 3476-amino-acid chain: Abnormal spindle-like microcephaly-associated protein homolog (3476 aa).

The interval 1-30 is disordered; sequence MANRRVGRGCWEVSPTERRPPAGLRGPAAE. Phosphoserine is present on residues S280, S283, S367, S392, and S425. Disordered regions lie at residues 416–443 and 562–581; these read SNEN…ECQG and APSS…GSME. Phosphoserine is present on S604. The Calponin-homology (CH) 1 domain maps to 919–1055; that stretch reads KASKEILLAF…LLWKIAFAFQ (137 aa). Residues 1056-1077 adopt a coiled-coil conformation; it reads VDISLNLDQLKEEIAFLKHTKS. S1102 is modified (phosphoserine). The 152-residue stretch at 1109–1260 folds into the Calponin-homology (CH) 2 domain; sequence SENIKLLMDW…YLSFLCARLL (152 aa). 40 consecutive IQ domains span residues 1346–1377, 1392–1421, 1581–1612, 1604–1633, 1631–1660, 1654–1683, 1727–1756, 1750–1781, 1800–1829, 1823–1852, 1873–1902, 1896–1927, 1946–1977, 1969–2000, 2019–2048, 2042–2073, 2092–2123, 2115–2146, 2165–2196, 2238–2269, 2261–2292, 2310–2341, 2333–2364, 2383–2414, 2406–2437, 2456–2487, 2479–2510, 2529–2560, 2623–2652, 2664–2695, 2687–2718, 2737–2766, 2858–2889, 2908–2937, 2931–2962, 2953–2984, 3028–3059, 3078–3109, 3180–3209, and 3203–3234; these read QNKA…IILQ, YLWA…MLKS, LKKT…VIIQ, MKKA…KTRS, TRSA…SVIK, ILTS…ATIK, MRES…AVIS, QRKA…IVIQ, VKKA…AALK, QSIA…SIIK, TKAA…AVLK, EHQA…LVIQ, LRHA…VIIQ, QHKC…LLIQ, TKAA…AAVT, CNKA…IIIQ, LKKT…TFIK, MHRA…IVIQ, ILKA…TLIQ, LRHS…TLIQ, MHIA…ILIQ, VQNA…TFIQ, MHRA…VVIQ, QRHS…TLIQ, MHSS…IFVQ, LRKA…ILIQ, MQRA…ILIQ, QWHS…IIIQ, QHQA…TVVS, RTQA…TLIQ, MHQA…VVIQ, VQKS…EKVA, QKRA…VVLQ, IRSS…STIK, IKNS…KIQA, KVKA…KIIQ, RHRA…LIIQ, FKKS…RLLH, RNRA…GIIK, and FTSG…IRLS.

Its subcellular location is the cytoplasm. It localises to the cytoskeleton. The protein resides in the spindle. The protein localises to the nucleus. Its function is as follows. Probable role in mitotic spindle regulation and coordination of mitotic processes. May have a preferential role in regulating neurogenesis. This Gorilla gorilla gorilla (Western lowland gorilla) protein is Abnormal spindle-like microcephaly-associated protein homolog (ASPM).